Consider the following 98-residue polypeptide: Carboxysome shell protein CsoS1C (98 aa).

Positions 8-93 (ALGMIETRGL…VHSEVENILP (86 aa)) constitute a BMC domain.

Belongs to the bacterial microcompartments protein family. CsoS1 subfamily. As to quaternary structure, homohexamer with a small central pore. Interacts with the N-terminus (residues 1-136) of RuBisCO (CbbL).

It is found in the carboxysome. Functionally, one of shell proteins of the carboxysome, a polyhedral inclusion where RuBisCO (ribulose bisphosphate carboxylase, ccbL-ccbS) is sequestered. Assembles into hexamers which make sheets that form the facets of the polyhedral carboxysome. The shell probably limits the diffusion of CO(2) into and out of the carboxysome. There are estimated to be 2970 CsoS1A/CsoS1C proteins per carboxysome (the proteins differ by only 1 residue). Unlike beta-carboxysomes, alpha-carboxysomes (Cb) can form without cargo protein. CsoS2 is essential for Cb formation and is also capable of targeting foreign proteins to the Cb. The Cb shell assembles with the aid of CsoS2; CsoS1A, CsoS1B and CsoS1C form the majority of the shell while CsoS4A and CsoS4B form vertices. CsoS1D forms pseudohexamers that probably control metabolite flux into and out of the shell. This chain is Carboxysome shell protein CsoS1C, found in Halothiobacillus neapolitanus (strain ATCC 23641 / c2) (Thiobacillus neapolitanus).